The primary structure comprises 308 residues: MSTWTGKRVAVLYGGRSSEREVSLRTGAACADALRQKGHDVVLLDVDLEVAARLRAERVEVAFVALHGRFGEDGSIQGLLESMAIPYTGSGVLASAMGMDKTVSKAIFRSLGLAVADYRVFPRASAGSIGVGDLPFGLPCVVKPAGEGSSVGVHLVNEAAELGPACRDAASHAGDVIVERYVKGTEVDVAVLDGKALGAIEIVPANAFYDYAAKYTAGTTKYFYPARLPEAHVRAVMEAAEAAHRGIGCSGVTRVDFIVAGDGTPYILEVNTLPGMTATSLVPKIAAGLGLSFPDLCERILDGAALKA.

Residues 105-302 form the ATP-grasp domain; it reads KAIFRSLGLA…FPDLCERILD (198 aa). 133–188 is a binding site for ATP; the sequence is DLPFGLPCVVKPAGEGSSVGVHLVNEAAELGPACRDAASHAGDVIVERYVKGTEVD. Residues Asp256, Glu269, and Asn271 each coordinate Mg(2+).

Belongs to the D-alanine--D-alanine ligase family. Mg(2+) is required as a cofactor. Mn(2+) serves as cofactor.

It localises to the cytoplasm. The catalysed reaction is 2 D-alanine + ATP = D-alanyl-D-alanine + ADP + phosphate + H(+). The protein operates within cell wall biogenesis; peptidoglycan biosynthesis. Its function is as follows. Cell wall formation. This Anaeromyxobacter sp. (strain K) protein is D-alanine--D-alanine ligase.